The primary structure comprises 1548 residues: Dual oxidase 2 (1548 aa).

The signal sequence occupies residues 1–25 (MLRARPEALMLLGALLTGSLGPSGN). Residues 26 to 601 (QDALSLPWEV…EGSSPGFAIT (576 aa)) are Extracellular-facing. A peroxidase-like; mediates peroxidase activity region spans residues 30–596 (SLPWEVQRYD…VLDFFEGSSP (567 aa)). N-linked (GlcNAc...) asparagine glycosylation is found at asparagine 100, asparagine 348, asparagine 382, asparagine 455, and asparagine 537. Cysteine 124 and cysteine 1162 are oxidised to a cystine. The chain crosses the membrane as a helical span at residues 602 to 622 (IIALCCLPLVSLLLSGVVAYF). Residues 623–1041 (RGREHKKLQK…KRFVENYRRH (419 aa)) are Cytoplasmic-facing. 3 EF-hand domains span residues 819–854 (PQDM…FMKG), 855–890 (SPED…FIEI), and 899–934 (QLAE…HDSE). Ca(2+) is bound by residues aspartate 832, aspartate 834, asparagine 836, tyrosine 838, glutamate 843, aspartate 868, aspartate 870, asparagine 872, and glutamate 879. Residues 960 to 1245 (ISCRVSFITR…GSYALIQLPT (286 aa)) form an interaction with TXNDC11 region. Positions 971–991 (PGERSHPQGLGPPAPEAPELG) are disordered. The helical transmembrane segment at 1042–1062 (IVCVAIFSAICVGVFADRAYY) threads the bilayer. Over 1063–1076 (YGFASPPSDIAQTT) the chain is Extracellular. The chain crosses the membrane as a helical span at residues 1077 to 1097 (LVGIILSRGTAASVSFMFSYI). The Ferric oxidoreductase domain maps to 1084-1266 (RGTAASVSFM…YGGDKLVSLS (183 aa)). The Cytoplasmic portion of the chain corresponds to 1098–1128 (LLTMCRNLITFLRETFLNRYVPFDAAVDFHR). The helical transmembrane segment at 1129–1151 (WIAMAAVVLAILHSAGHAVNVYI) threads the bilayer. Residues 1152 to 1185 (FSVSPLSLLACIFPNVFVNDGSKLPQKFYWWFFQ) lie on the Extracellular side of the membrane. The helical transmembrane segment at 1186–1206 (TVPGMTGVLLLLVLAIMYVFA) threads the bilayer. Topologically, residues 1207–1223 (SHHFRRRSFRGFWLTHH) are cytoplasmic. The next 2 membrane-spanning stretches (helical) occupy residues 1224–1244 (LYIL…IQLP) and 1245–1265 (TFHI…LVSL). Over 1266 to 1548 (SRKKVEISVV…AHFMHHYENF (283 aa)) the chain is Cytoplasmic. Residues 1267 to 1373 (RKKVEISVVK…DGPFGEGHQE (107 aa)) enclose the FAD-binding FR-type domain.

The protein in the N-terminal section; belongs to the peroxidase family. Heterodimer with DUOXA2; disulfide-linked. Interacts with TXNDC11, TPO and CYBA. N-glycosylated. As to expression, expressed in colon, small intestine, duodenum and tracheal surface epithelial cells (at protein level). Expressed in thyrocytes. Also detected in kidney, liver, lung, pancreas, prostate, salivary glands, rectum and testis.

It localises to the apical cell membrane. The protein resides in the cell junction. It carries out the reaction NADH + O2 + H(+) = H2O2 + NAD(+). The catalysed reaction is NADPH + O2 + H(+) = H2O2 + NADP(+). The protein operates within hormone biosynthesis; thyroid hormone biosynthesis. Peroxidase activity is inhibited by aminobenzohydrazide. The NADPH oxidase activity is calcium-dependent. Generates hydrogen peroxide which is required for the activity of thyroid peroxidase/TPO and lactoperoxidase/LPO. Plays a role in thyroid hormones synthesis and lactoperoxidase-mediated antimicrobial defense at the surface of mucosa. May have its own peroxidase activity through its N-terminal peroxidase-like domain. The protein is Dual oxidase 2 (DUOX2) of Homo sapiens (Human).